The sequence spans 155 residues: MSGNQMAMGSEQQQTVGSRTVSVEEVPAVLQLRATQDPPRSQEAMPTRHNVRWEENVIDNENMNKKKTKICCIFHPQNEDEEECNHHSDDDGSSSSGSSSSESENEKDLDFNERRQRRLERRHRKLEKKRSYSPNAYEIQPDYSEYRRKQQEKKD.

The segment covering Met-1–Val-21 has biased composition (polar residues). 2 disordered regions span residues Met-1–Asn-56 and Glu-79–Asp-155. An N-acetylserine modification is found at Ser-2. The residue at position 22 (Ser-22) is a Phosphoserine. Residues Val-51–Trp-53 carry the GLC7-binding motif. The segment covering Ser-93 to Glu-102 has biased composition (low complexity). Positions Glu-104–Arg-114 are enriched in basic and acidic residues. Positions Arg-115–Lys-128 are enriched in basic residues. At Ser-133 the chain carries Phosphoserine. Basic and acidic residues predominate over residues Ser-144 to Asp-155.

It belongs to the YPI1 family. In terms of assembly, interacts with GLC7, PPZ1 and SDS22.

The protein resides in the nucleus. In terms of biological role, regulator of type 1 phosphatases which maintains protein phosphatase activity under strict control. Regulates the nuclear localization of type 1 phosphatase GLC7 and SDS22, and is involved in the regulation of mRNA 3'-end processing. May also regulate the activity of type 1 phosphatase PPZ1. The protein is Type 1 phosphatases regulator YPI1 (YPI1) of Saccharomyces cerevisiae (strain YJM789) (Baker's yeast).